Consider the following 330-residue polypeptide: D-xylose-binding periplasmic protein (330 aa).

The signal sequence occupies residues 1-23 (MKIKNILLTLCTSLLLTNVAAHA).

It belongs to the bacterial solute-binding protein 2 family.

It is found in the periplasm. In terms of biological role, involved in the high-affinity D-xylose membrane transport system. Binds with high affinity to xylose. The polypeptide is D-xylose-binding periplasmic protein (xylF) (Escherichia coli (strain K12)).